Consider the following 127-residue polypeptide: uncharacterized protein (127 aa).

This is an uncharacterized protein from Homo sapiens (Human).